The sequence spans 269 residues: Tryptophan synthase alpha chain (269 aa).

Active-site proton acceptor residues include Glu-49 and Asp-60.

Belongs to the TrpA family. In terms of assembly, tetramer of two alpha and two beta chains.

It catalyses the reaction (1S,2R)-1-C-(indol-3-yl)glycerol 3-phosphate + L-serine = D-glyceraldehyde 3-phosphate + L-tryptophan + H2O. It participates in amino-acid biosynthesis; L-tryptophan biosynthesis; L-tryptophan from chorismate: step 5/5. Functionally, the alpha subunit is responsible for the aldol cleavage of indoleglycerol phosphate to indole and glyceraldehyde 3-phosphate. In Pseudomonas putida (Arthrobacter siderocapsulatus), this protein is Tryptophan synthase alpha chain.